Consider the following 282-residue polypeptide: Pantothenate synthetase (282 aa).

ATP is bound at residue 30–37 (MGYLHEGH). Catalysis depends on histidine 37, which acts as the Proton donor. Glutamine 61 serves as a coordination point for (R)-pantoate. Glutamine 61 contributes to the beta-alanine binding site. 147-150 (GMKD) is an ATP binding site. Residue glutamine 153 participates in (R)-pantoate binding. ATP contacts are provided by residues valine 176 and 184 to 187 (KSSR).

Belongs to the pantothenate synthetase family. Homodimer.

The protein localises to the cytoplasm. The enzyme catalyses (R)-pantoate + beta-alanine + ATP = (R)-pantothenate + AMP + diphosphate + H(+). It functions in the pathway cofactor biosynthesis; (R)-pantothenate biosynthesis; (R)-pantothenate from (R)-pantoate and beta-alanine: step 1/1. Catalyzes the condensation of pantoate with beta-alanine in an ATP-dependent reaction via a pantoyl-adenylate intermediate. This is Pantothenate synthetase from Bacillus cereus (strain ATCC 14579 / DSM 31 / CCUG 7414 / JCM 2152 / NBRC 15305 / NCIMB 9373 / NCTC 2599 / NRRL B-3711).